The sequence spans 1088 residues: Leucine-rich repeat receptor-like protein kinase PEPR2 (1088 aa).

The N-terminal stretch at 1–26 (MRNLGLLEITLLCSLFVYFRIDSVSS) is a signal peptide. Topologically, residues 27–739 (LNSDGLALLS…QVKLSTWKIA (713 aa)) are extracellular. N-linked (GlcNAc...) asparagine glycans are attached at residues Asn55, Asn82, and Asn122. LRR repeat units follow at residues 75–99 (GNVV…IGEL), 100–122 (KSLV…TLGN), 123–146 (CTSL…IFGS), 147–170 (LQNL…SVGG), 172–194 (IELV…LLGN), 195–219 (CSKL…LYLL), 221–243 (NLGE…SSNC), 244–267 (KKLV…IGNC), 269–291 (SLHS…MGML), 292–315 (RKVS…LGNC), 316–339 (SSLE…LSKL), 341–363 (KLQS…IWKI), 365–387 (SLTQ…VTQL), 388–411 (KHLK…LGLN), 412–435 (RSLE…LCHG), 436–459 (QKLR…IRQC), 460–485 (KTLE…SLSL), 487–506 (YVNL…LGSC), 507–529 (KNLL…ELGN), 530–554 (LQSL…LSGC), 556–577 (RLLY…SFRS), 578–602 (WKSL…LAEL), 603–627 (DRLS…GLLK), 629–651 (LRYG…LGAL), 652–676 (INLE…SLKS), and 678–698 (NQVD…LLSN). N-linked (GlcNAc...) asparagine glycans are attached at residues Asn149, Asn159, Asn183, Asn194, Asn209, Asn229, Asn266, Asn279, and Asn314. 2 N-linked (GlcNAc...) asparagine glycosylation sites follow: Asn373 and Asn411. N-linked (GlcNAc...) asparagine glycans are attached at residues Asn537 and Asn568. 2 N-linked (GlcNAc...) asparagine glycosylation sites follow: Asn658 and Asn698. Residues 740–760 (LIAAGSSLSVLALLFALFLVL) traverse the membrane as a helical segment. At 761–1088 (CRCKRGTKTE…FVRSTSGSVH (328 aa)) the chain is on the cytoplasmic side. At Thr791 the chain carries Phosphothreonine. A Protein kinase domain is found at 794 to 1080 (LDDKYIIGRG…KDLTDLESFV (287 aa)). ATP is bound by residues 800-808 (IGRGAHGVV) and Lys822. Phosphotyrosine is present on residues Tyr868 and Tyr908. The Proton acceptor role is filled by Asp921. Tyr962 and Tyr969 each carry phosphotyrosine.

This sequence belongs to the protein kinase superfamily. Ser/Thr protein kinase family. Interacts with BAK1. Interacts with CLE14.

The protein resides in the cell membrane. The enzyme catalyses L-seryl-[protein] + ATP = O-phospho-L-seryl-[protein] + ADP + H(+). It catalyses the reaction L-threonyl-[protein] + ATP = O-phospho-L-threonyl-[protein] + ADP + H(+). Functionally, acts as a receptor for PEP defense peptides. Unlike typical immune receptors, senses an endogenous elicitor that potentiates PAMP-inducible plant responses. This is Leucine-rich repeat receptor-like protein kinase PEPR2 (PEPR2) from Arabidopsis thaliana (Mouse-ear cress).